The primary structure comprises 581 residues: ATP-dependent lipid A-core flippase (581 aa).

Transmembrane regions (helical) follow at residues 27–47 (VFLA…FPAI), 63–83 (MVWL…VIVY), 154–174 (IALI…TLAI), 251–271 (MTPI…FLAL), and 279–299 (GASA…ISPV). The ABC transmembrane type-1 domain maps to 28–311 (FLAVIGMVGT…LATVNPTIQR (284 aa)). One can recognise an ABC transporter domain in the interval 343-579 (ICFDNVSLRY…GSYYANLSRL (237 aa)). Residue 377-384 (GASGGGKS) coordinates ATP.

The protein belongs to the ABC transporter superfamily. Lipid exporter (TC 3.A.1.106) family. As to quaternary structure, homodimer.

The protein resides in the cell inner membrane. It catalyses the reaction ATP + H2O + lipid A-core oligosaccharideSide 1 = ADP + phosphate + lipid A-core oligosaccharideSide 2.. In terms of biological role, involved in lipopolysaccharide (LPS) biosynthesis. Translocates lipid A-core from the inner to the outer leaflet of the inner membrane. Transmembrane domains (TMD) form a pore in the inner membrane and the ATP-binding domain (NBD) is responsible for energy generation. This is ATP-dependent lipid A-core flippase from Albidiferax ferrireducens (strain ATCC BAA-621 / DSM 15236 / T118) (Rhodoferax ferrireducens).